A 752-amino-acid polypeptide reads, in one-letter code: Exocyst complex component EXO84B (752 aa).

Disordered stretches follow at residues 511–532 and 724–752; these read QTGQRTDDLRRPLDRQNRNPEQ and TKGNNGDVHSPTASVSAQSVSSARSHGSY. Over residues 515–532 the composition is skewed to basic and acidic residues; the sequence is RTDDLRRPLDRQNRNPEQ. Positions 733–752 are enriched in low complexity; the sequence is SPTASVSAQSVSSARSHGSY.

Belongs to the EXO84 family. As to quaternary structure, the exocyst complex is composed of SEC3, SEC5, SEC6, SEC8, SEC10, EXO70A1 and EXO84B. Interacts with SEC6, SEC10, SEC15B and EXO70A1. Interacts with EXO70B1. Binds directly to B1L.

It is found in the cytoplasm. The protein localises to the cytosol. Its subcellular location is the perinuclear region. It localises to the cytoskeleton. The protein resides in the phragmoplast. It is found in the secreted. The protein localises to the cell wall. Its subcellular location is the cell membrane. In terms of biological role, component of the exocyst complex involved in the docking of exocytic vesicles with fusion sites on the plasma membrane during regulated or polarized secretion. Involved in polarized cell growth and organ morphogenesis. During cytokinesis, involved in cell plate initiation, cell plate maturation and formation of new primary cell wall. Probable component of an exocyst subcomplex specifically involved in autophagy-related, Golgi-independent membrane traffic to the vacuole. Regulates autophagosome formation and autophagy-related Golgi-independent import into the vacuole. Mediates ABCG36/PEN3 outer-membrane polarity at the periphery of lateral root cap and root epidermal cells. In Arabidopsis thaliana (Mouse-ear cress), this protein is Exocyst complex component EXO84B.